Consider the following 160-residue polypeptide: Cytochrome b6-f complex subunit 4 (160 aa).

The next 3 membrane-spanning stretches (helical) occupy residues 36–56 (LLYI…GLAV), 95–115 (LLGI…PFIE), and 128–148 (IAMS…IGAC).

It belongs to the cytochrome b family. PetD subfamily. As to quaternary structure, the 4 large subunits of the cytochrome b6-f complex are cytochrome b6, subunit IV (17 kDa polypeptide, PetD), cytochrome f and the Rieske protein, while the 4 small subunits are PetG, PetL, PetM and PetN. The complex functions as a dimer.

The protein resides in the cellular thylakoid membrane. Component of the cytochrome b6-f complex, which mediates electron transfer between photosystem II (PSII) and photosystem I (PSI), cyclic electron flow around PSI, and state transitions. This chain is Cytochrome b6-f complex subunit 4, found in Prochlorococcus marinus (strain MIT 9312).